We begin with the raw amino-acid sequence, 400 residues long: Imidazolonepropionase (400 aa).

Fe(3+)-binding residues include His-68 and His-70. His-68 and His-70 together coordinate Zn(2+). Residues Arg-77, Tyr-140, and His-173 each contribute to the 4-imidazolone-5-propanoate site. Tyr-140 contacts N-formimidoyl-L-glutamate. Fe(3+) is bound at residue His-238. His-238 contacts Zn(2+). Residue Gln-241 coordinates 4-imidazolone-5-propanoate. Asp-313 serves as a coordination point for Fe(3+). Asp-313 lines the Zn(2+) pocket. Asn-315 and Gly-317 together coordinate N-formimidoyl-L-glutamate. Position 318 (Thr-318) interacts with 4-imidazolone-5-propanoate.

Belongs to the metallo-dependent hydrolases superfamily. HutI family. Requires Zn(2+) as cofactor. Fe(3+) is required as a cofactor.

It is found in the cytoplasm. The enzyme catalyses 4-imidazolone-5-propanoate + H2O = N-formimidoyl-L-glutamate. It participates in amino-acid degradation; L-histidine degradation into L-glutamate; N-formimidoyl-L-glutamate from L-histidine: step 3/3. Functionally, catalyzes the hydrolytic cleavage of the carbon-nitrogen bond in imidazolone-5-propanoate to yield N-formimidoyl-L-glutamate. It is the third step in the universal histidine degradation pathway. This Paracoccus denitrificans (strain Pd 1222) protein is Imidazolonepropionase.